The following is a 519-amino-acid chain: MGLVIFLALIVLILIIGLRIFKAFMILVWHPFVLTRRLKNQGISGPNYRIFYGNLSEIKKMKRESHLSILDPSSNDIFPRILPHYQKWMSQYGETFLYWNGTEPRICISDPELAKTMLSNKLGFFVKSKARPEAVKLVGSKGLVFIEGADWVRHRRILNPAFSIDRLKIMTTVMVDCTLKMLEEWRKESTKEETEHPKIKKEMNEEFQRLTADIIATSAFGSSYVEGIEVFRSQMELKRCYTTSLNQVSIPGTQYLPTPSNIRVWKLERKMDNSIKRIISSRLQSKSDYGDDLLGILLKAYNTEGKERKMSIEEIIHECRTFFFGGHETTSNLLAWTTMLLSLHQDWQEKLREEIFKECGKEKTPDSETFSKLKLMNMVIMESLRLYGPVSALAREASVNIKLGDLEIPKGTTVVIPLLKMHSDKTLWGSDADKFNPMRFANGVSRAANHPNALLAFSVGPRACIGQNFVMIEAKTVLTMILQRFRFISLCDEYKHTPVDNVTIQPQYGLPVMLQPLED.

Residues M1 to F21 traverse the membrane as a helical segment. C464 provides a ligand contact to heme.

This sequence belongs to the cytochrome P450 family. Heme serves as cofactor. As to expression, highly expressed in siliques.

Its subcellular location is the membrane. In terms of biological role, involved in stress response. Does not function as cytokinin hydroxylase in yeast heterologous system. The sequence is that of Cytochrome P450 709B1 from Arabidopsis thaliana (Mouse-ear cress).